Consider the following 172-residue polypeptide: Arginine repressor (172 aa).

It belongs to the ArgR family.

It is found in the cytoplasm. The protein operates within amino-acid biosynthesis; L-arginine biosynthesis [regulation]. Its function is as follows. Regulates arginine biosynthesis genes. The chain is Arginine repressor from Bifidobacterium adolescentis (strain ATCC 15703 / DSM 20083 / NCTC 11814 / E194a).